The primary structure comprises 303 residues: Aquaporin NIP1-2 (303 aa).

The tract at residues 1 to 39 (MAGREDGAAAGAMEEGQDSKEVKCESSEDGSSSSSSSRC) is disordered. Basic and acidic residues predominate over residues 17-26 (QDSKEVKCES). Helical transmembrane passes span 66-86 (ILAE…AVVV) and 91-111 (GGAV…MVLV). The NPA 1 motif lies at 123-125 (NPA). The next 3 membrane-spanning stretches (helical) occupy residues 145-165 (VVAQ…VFGG), 188-208 (AAAL…GVAT), and 212-232 (AIGE…VLFA). Residues 241–243 (NPA) carry the NPA 2 motif. The helical transmembrane segment at 255–275 (YGGVWVYVAAPVSGTVCGAWA) threads the bilayer.

It belongs to the MIP/aquaporin (TC 1.A.8) family. NIP (TC 1.A.8.12) subfamily. In terms of tissue distribution, expressed in roots and leaves, and at lower levels in anthers.

The protein resides in the membrane. Aquaporins facilitate the transport of water and small neutral solutes across cell membranes. The polypeptide is Aquaporin NIP1-2 (NIP1-2) (Oryza sativa subsp. japonica (Rice)).